The sequence spans 315 residues: Ribose-phosphate pyrophosphokinase (315 aa).

Residues 37–39 (DGE) and 96–97 (RQ) each bind ATP. The Mg(2+) site is built by histidine 131 and aspartate 170. Residue lysine 194 is part of the active site. Residues arginine 196, aspartate 220, and 224–228 (DTGGT) each bind D-ribose 5-phosphate.

This sequence belongs to the ribose-phosphate pyrophosphokinase family. Class I subfamily. Homohexamer. Mg(2+) is required as a cofactor.

Its subcellular location is the cytoplasm. The enzyme catalyses D-ribose 5-phosphate + ATP = 5-phospho-alpha-D-ribose 1-diphosphate + AMP + H(+). The protein operates within metabolic intermediate biosynthesis; 5-phospho-alpha-D-ribose 1-diphosphate biosynthesis; 5-phospho-alpha-D-ribose 1-diphosphate from D-ribose 5-phosphate (route I): step 1/1. Involved in the biosynthesis of the central metabolite phospho-alpha-D-ribosyl-1-pyrophosphate (PRPP) via the transfer of pyrophosphoryl group from ATP to 1-hydroxyl of ribose-5-phosphate (Rib-5-P). This is Ribose-phosphate pyrophosphokinase from Photorhabdus laumondii subsp. laumondii (strain DSM 15139 / CIP 105565 / TT01) (Photorhabdus luminescens subsp. laumondii).